Here is a 516-residue protein sequence, read N- to C-terminus: uncharacterized protein (516 aa).

The next 5 helical transmembrane spans lie at 10-27, 32-54, 64-83, 95-117, and 165-187; these read IRYP…GYWI, IGAF…GDFA, SFLF…PQFV, LLAV…ILGL, and AVCY…PALL. RCK C-terminal domains are found at residues 208-291 and 296-376; these read KPGL…SRAE and RELL…NIGV. 4 consecutive transmembrane segments (helical) span residues 386-408, 412-430, 443-465, and 480-502; these read FVVL…FPVG, IALS…VGHL, GAIS…IHAG, and LLGG…HFVL.

Belongs to the AAE transporter (TC 2.A.81) family.

The protein localises to the cell membrane. This is an uncharacterized protein from Bradyrhizobium diazoefficiens (strain JCM 10833 / BCRC 13528 / IAM 13628 / NBRC 14792 / USDA 110).